A 293-amino-acid chain; its full sequence is Elongation factor Ts (293 aa).

The segment at 80 to 83 (TDFV) is involved in Mg(2+) ion dislocation from EF-Tu.

It belongs to the EF-Ts family.

The protein localises to the cytoplasm. Functionally, associates with the EF-Tu.GDP complex and induces the exchange of GDP to GTP. It remains bound to the aminoacyl-tRNA.EF-Tu.GTP complex up to the GTP hydrolysis stage on the ribosome. This Lacticaseibacillus casei (strain BL23) (Lactobacillus casei) protein is Elongation factor Ts.